A 289-amino-acid chain; its full sequence is ATP synthase subunit a (289 aa).

A run of 6 helical transmembrane segments spans residues 43–63 (AFHV…VLLF), 103–123 (VIAP…AVDL), 160–180 (FSVF…GGFI), 193–213 (IFVQ…TLIA), 232–252 (VFIL…GLGV), and 259–279 (AVFH…LTIV).

Belongs to the ATPase A chain family. F-type ATPases have 2 components, CF(1) - the catalytic core - and CF(0) - the membrane proton channel. CF(1) has five subunits: alpha(3), beta(3), gamma(1), delta(1), epsilon(1). CF(0) has three main subunits: a(1), b(2) and c(9-12). The alpha and beta chains form an alternating ring which encloses part of the gamma chain. CF(1) is attached to CF(0) by a central stalk formed by the gamma and epsilon chains, while a peripheral stalk is formed by the delta and b chains.

It is found in the cell inner membrane. Its function is as follows. Key component of the proton channel; it plays a direct role in the translocation of protons across the membrane. This chain is ATP synthase subunit a, found in Pseudomonas fluorescens (strain Pf0-1).